The chain runs to 437 residues: MSEEQDPLLAGLGETSGDNHTQQSHEQQPEQPQETEEHHEEEPSRVDPEQEAHNKALNQFKRKLLEHRRYDDQLKQRRQNIRDLEKLYDKTENDIKALQSIGQLIGEVMKELSEEKYIVKASSGPRYIVGVRNSVDRSKLKKGVRVTLDITTLTIMRILPRETDPLVYNMTSFEQGEITFDGIGGLTEQIRELREVIELPLKNPEIFQRVGIKPPKGVLLYGPPGTGKTLLAKAVAATIGANFIFSPASGIVDKYIGESARIIREMFAYAKEHEPCIIFMDEVDAIGGRRFSEGTSADREIQRTLMELLTQMDGFDNLGQTKIIMATNRPDTLDPALLRPGRLDRKVEIPLPNEAGRLEIFKIHTAKVKKTGEFDFEAAVKMSDGFNGADIRNCATEAGFFAIRDDRDHINPDDLMKAVRKVAEVKKLEGTIEYQKL.

The disordered stretch occupies residues 1 to 51 (MSEEQDPLLAGLGETSGDNHTQQSHEQQPEQPQETEEHHEEEPSRVDPEQE). Ser2 bears the N-acetylserine mark. Low complexity predominate over residues 20 to 32 (HTQQSHEQQPEQP). A compositionally biased stretch (basic and acidic residues) spans 35–51 (TEEHHEEEPSRVDPEQE). ATP is bound at residue 222-229 (GPPGTGKT).

It belongs to the AAA ATPase family. In terms of processing, N-acetylated by NAT1.

The 26S proteasome is involved in the ATP-dependent degradation of ubiquitinated proteins. The regulatory (or ATPase) complex confers ATP dependency and substrate specificity to the 26S complex. The polypeptide is 26S proteasome subunit RPT4 (RPT4) (Saccharomyces cerevisiae (strain ATCC 204508 / S288c) (Baker's yeast)).